The primary structure comprises 459 residues: UDP-N-acetylmuramoylalanine--D-glutamate ligase (459 aa).

119–125 is a binding site for ATP; it reads GTNGKTT.

It belongs to the MurCDEF family.

It is found in the cytoplasm. It carries out the reaction UDP-N-acetyl-alpha-D-muramoyl-L-alanine + D-glutamate + ATP = UDP-N-acetyl-alpha-D-muramoyl-L-alanyl-D-glutamate + ADP + phosphate + H(+). The protein operates within cell wall biogenesis; peptidoglycan biosynthesis. In terms of biological role, cell wall formation. Catalyzes the addition of glutamate to the nucleotide precursor UDP-N-acetylmuramoyl-L-alanine (UMA). This Lactiplantibacillus plantarum (strain ATCC BAA-793 / NCIMB 8826 / WCFS1) (Lactobacillus plantarum) protein is UDP-N-acetylmuramoylalanine--D-glutamate ligase.